We begin with the raw amino-acid sequence, 241 residues long: Ribosomal RNA large subunit methyltransferase E (241 aa).

The S-adenosyl-L-methionine site is built by G88, W90, D111, D127, and D151. Residue K191 is the Proton acceptor of the active site.

It belongs to the class I-like SAM-binding methyltransferase superfamily. RNA methyltransferase RlmE family.

The protein localises to the cytoplasm. The enzyme catalyses uridine(2552) in 23S rRNA + S-adenosyl-L-methionine = 2'-O-methyluridine(2552) in 23S rRNA + S-adenosyl-L-homocysteine + H(+). In terms of biological role, specifically methylates the uridine in position 2552 of 23S rRNA at the 2'-O position of the ribose in the fully assembled 50S ribosomal subunit. The chain is Ribosomal RNA large subunit methyltransferase E from Bartonella quintana (strain Toulouse) (Rochalimaea quintana).